The following is a 522-amino-acid chain: 2-isopropylmalate synthase (522 aa).

In terms of domain architecture, Pyruvate carboxyltransferase spans 5–267; sequence VIIFDTTLRD…ETGINAKEIH (263 aa). Mn(2+) is bound by residues Asp14, His202, His204, and Asn238. The segment at 392-522 is regulatory domain; sequence QLQQLVVQSD…MHKNRELGGV (131 aa).

The protein belongs to the alpha-IPM synthase/homocitrate synthase family. LeuA type 1 subfamily. Homodimer. The cofactor is Mn(2+).

It is found in the cytoplasm. The enzyme catalyses 3-methyl-2-oxobutanoate + acetyl-CoA + H2O = (2S)-2-isopropylmalate + CoA + H(+). It participates in amino-acid biosynthesis; L-leucine biosynthesis; L-leucine from 3-methyl-2-oxobutanoate: step 1/4. Catalyzes the condensation of the acetyl group of acetyl-CoA with 3-methyl-2-oxobutanoate (2-ketoisovalerate) to form 3-carboxy-3-hydroxy-4-methylpentanoate (2-isopropylmalate). This chain is 2-isopropylmalate synthase, found in Shewanella sp. (strain MR-7).